A 697-amino-acid polypeptide reads, in one-letter code: Serine/threonine-protein kinase tousled-like 2 (697 aa).

Disordered regions lie at residues 27 to 136 (KAPL…TAPV) and 289 to 315 (LAKRKPPAMGQTPPANNEQKQRKNKTN). Residues 31 to 44 (NSESSNQSLCSLGS) are compositionally biased toward polar residues. Residues 46-62 (SDKELEQTPEKKQNDQR) are compositionally biased toward basic and acidic residues. Over residues 111–131 (SSPQHSLSNPLPLPSQQCSPP) the composition is skewed to low complexity. Coiled coils occupy residues 264-293 (AFQNLIKQQERINTQREEIERQRKMLAKRK) and 334-372 (FKLRLGHLKKEEAEIQAELERLERVRNLHIRELKRIHNE). The Protein kinase domain maps to 387–666 (YLLLHLLGRG…VQQLACDPYL (280 aa)). ATP contacts are provided by residues 393-401 (LGRGGFSEV) and Lys-416. Asp-517 functions as the Proton acceptor in the catalytic mechanism.

Belongs to the protein kinase superfamily. Ser/Thr protein kinase family. In terms of assembly, monomer. May form homodimers; homodimerization may enhance autophosphoylation and enzymatic activity. Heterodimer with TLK1. The cofactor is Mg(2+). In terms of processing, phosphorylated. Autophosphorylated; phosphorylation promotes the assembly of higher order oligomers and enzymatic activity.

The protein localises to the nucleus. It is found in the nucleoplasm. It localises to the cytoplasm. Its subcellular location is the perinuclear region. The protein resides in the cytoskeleton. The enzyme catalyses L-seryl-[protein] + ATP = O-phospho-L-seryl-[protein] + ADP + H(+). It carries out the reaction L-threonyl-[protein] + ATP = O-phospho-L-threonyl-[protein] + ADP + H(+). Functionally, serine/threonine-protein kinase involved in the process of chromatin assembly and probably also DNA replication, transcription, repair, and chromosome segregation. Negative regulator of amino acid starvation-induced autophagy. The polypeptide is Serine/threonine-protein kinase tousled-like 2 (Xenopus tropicalis (Western clawed frog)).